A 289-amino-acid chain; its full sequence is Probable early E4 33 kDa protein (289 aa).

This sequence belongs to the adenoviridae E4 30 to 34 kDa protein family. Interacts with E1B-55k.

It localises to the host nucleus. The protein localises to the host cytoplasm. Its function is as follows. Plays a major role to prevent cellular inhibition of viral genome replication by nuclear bodies. Assembles an SCF-like E3 ubiquitin ligase complex based on the cellular proteins ELOB, ELOC, CUL5 and RBX1, in cooperation with viral E1B-55K. This viral RING-type ligase ubiquitinates cellular substrates prior to proteasomal degradation: p53/TP53, LIG4, MRE11-RAD50-NBS1 (MRN) complex, ITGA3, DAXX and BLM. The protein is Probable early E4 33 kDa protein of Mus musculus (Mouse).